The sequence spans 183 residues: Adenine phosphoribosyltransferase (183 aa).

It belongs to the purine/pyrimidine phosphoribosyltransferase family. Homodimer.

It localises to the cytoplasm. It carries out the reaction AMP + diphosphate = 5-phospho-alpha-D-ribose 1-diphosphate + adenine. Its pathway is purine metabolism; AMP biosynthesis via salvage pathway; AMP from adenine: step 1/1. Its function is as follows. Catalyzes a salvage reaction resulting in the formation of AMP, that is energically less costly than de novo synthesis. This Shewanella pealeana (strain ATCC 700345 / ANG-SQ1) protein is Adenine phosphoribosyltransferase.